We begin with the raw amino-acid sequence, 1038 residues long: Pro-apoptotic serine protease nma111 (1038 aa).

The interval 1 to 47 is disordered; sequence MDLNGDSNAKRKRSSISAAAERPAKHLRPENSSLTPGDTTPANGTVY. Over residues 30–43 the composition is skewed to polar residues; sequence ENSSLTPGDTTPAN. The serine protease stretch occupies residues 82-275; it reads VVSIHFCQTC…DRPLRALNCI (194 aa). Active-site charge relay system residues include His-120, Asp-151, and Ser-233. 2 PDZ domains span residues 289-374 and 877-958; these read QWIL…LLVQ and VFCG…VTFD.

It belongs to the peptidase S1C family.

The protein resides in the nucleus. In terms of biological role, nuclear serine protease which mediates apoptosis. This chain is Pro-apoptotic serine protease nma111 (nma111), found in Aspergillus terreus (strain NIH 2624 / FGSC A1156).